Reading from the N-terminus, the 969-residue chain is RNA polymerase-associated protein RapA (969 aa).

The region spanning 164-334 (EVGRRHAPRV…FARLRLLDPD (171 aa)) is the Helicase ATP-binding domain. 177-184 (DEVGLGKT) contacts ATP. The DEAH box motif lies at 280-283 (DEAH). A Helicase C-terminal domain is found at 492-686 (RVNWLLEKVK…ELKSQLEQGR (195 aa)).

The protein belongs to the SNF2/RAD54 helicase family. RapA subfamily. Interacts with the RNAP. Has a higher affinity for the core RNAP than for the holoenzyme. Its ATPase activity is stimulated by binding to RNAP.

Transcription regulator that activates transcription by stimulating RNA polymerase (RNAP) recycling in case of stress conditions such as supercoiled DNA or high salt concentrations. Probably acts by releasing the RNAP, when it is trapped or immobilized on tightly supercoiled DNA. Does not activate transcription on linear DNA. Probably not involved in DNA repair. This chain is RNA polymerase-associated protein RapA, found in Vibrio parahaemolyticus serotype O3:K6 (strain RIMD 2210633).